Consider the following 261-residue polypeptide: Orotidine 5'-phosphate decarboxylase (261 aa).

Substrate is bound by residues aspartate 34, 56 to 58, 88 to 97, tyrosine 214, and arginine 232; these read KTH and DRKFADIGNT. Lysine 90 functions as the Proton donor in the catalytic mechanism.

The protein belongs to the OMP decarboxylase family.

The catalysed reaction is orotidine 5'-phosphate + H(+) = UMP + CO2. It participates in pyrimidine metabolism; UMP biosynthesis via de novo pathway; UMP from orotate: step 2/2. This Kodamaea ohmeri (Yeast) protein is Orotidine 5'-phosphate decarboxylase (URA3).